Consider the following 776-residue polypeptide: Conserved oligomeric Golgi complex subunit 4 (776 aa).

Ser342 and Ser345 each carry phosphoserine.

The protein belongs to the COG4 family. As to quaternary structure, component of the conserved oligomeric Golgi complex which is composed of eight different subunits and is required for normal Golgi morphology and localization.

The protein localises to the golgi apparatus membrane. In terms of biological role, required for normal Golgi function. In Drosophila melanogaster (Fruit fly), this protein is Conserved oligomeric Golgi complex subunit 4.